An 81-amino-acid chain; its full sequence is DNA-binding protein TubR (81 aa).

In terms of assembly, monomer; probably dimerizes when bound to DNA. Binds to TubZ when associated with tubC DNA.

The protein resides in the host cytoplasm. A DNA-binding protein that is part of the type III partition system presumably used to ensure correct segregation of this bacteriophage. Binds to tubC (centromere-like site) DNA upstream of its own gene in a sequence-specific fashion (consensus TTGAC); binds to multiple sites in the tubC region, probably spreading from an initial site. Upon binding to tubC forms flexible loops over about 1 kb of DNA that forms 2 rings, covering tubC and the promoter region. This probably shuts off transcription of the operon. DNA is both bent and untwisted by TubR. The TubR-tubC DNA complex binds to TubZ forming large bundles and decreasing TubZ's GTPase activity. The sequence is that of DNA-binding protein TubR from Clostridium botulinum C phage (Clostridium botulinum C bacteriophage).